A 511-amino-acid chain; its full sequence is V-type proton ATPase subunit B, brain isoform (511 aa).

ATP is bound at residue Arg-400.

The protein belongs to the ATPase alpha/beta chains family. In terms of assembly, V-ATPase is a heteromultimeric enzyme made up of two complexes: the ATP-hydrolytic V1 complex and the proton translocation V0 complex. The V1 complex consists of three catalytic AB heterodimers that form a heterohexamer, three peripheral stalks each consisting of EG heterodimers, one central rotor including subunits D and F, and the regulatory subunits C and H. The proton translocation complex V0 consists of the proton transport subunit a, a ring of proteolipid subunits c9c'', rotary subunit d, subunits e and f, and the accessory subunits ATP6AP1/Ac45 and ATP6AP2/PRR. Kidney; found in early distal nephron, encompassing thick ascending limbs and distal convoluted tubules and in the alpha-intercalated cells of the cortical collecting ducts (at protein level). Expressed in epididymal clear cells (at protein level). Mainly expressed in the organ of Corti and spiral ganglion neurons, in both the early postnatal cochlea (P2) and the adult cochlea (P30).

The protein resides in the apical cell membrane. It localises to the melanosome. Its subcellular location is the cytoplasm. It is found in the cytoplasmic vesicle. The protein localises to the secretory vesicle. The protein resides in the synaptic vesicle membrane. It localises to the clathrin-coated vesicle membrane. Non-catalytic subunit of the V1 complex of vacuolar(H+)-ATPase (V-ATPase), a multisubunit enzyme composed of a peripheral complex (V1) that hydrolyzes ATP and a membrane integral complex (V0) that translocates protons. V-ATPase is responsible for acidifying and maintaining the pH of intracellular compartments and in some cell types, is targeted to the plasma membrane, where it is responsible for acidifying the extracellular environment. In renal intercalated cells, can partially compensate the lack of ATP6V1B1 and mediate secretion of protons (H+) into the urine under base-line conditions but not in conditions of acid load. This Mus musculus (Mouse) protein is V-type proton ATPase subunit B, brain isoform (Atp6v1b2).